Reading from the N-terminus, the 291-residue chain is Tyramine--L-glutamate ligase (291 aa).

An ATP-grasp domain is found at K104–N274. Position 131–176 (K131–S176) interacts with ATP. 3 residues coordinate Mg(2+): D236, E247, and N249. Residues D236, E247, and N249 each contribute to the Mn(2+) site.

The cofactor is Mg(2+). Mn(2+) serves as cofactor.

It carries out the reaction tyramine + L-glutamate + ATP = gamma-L-glutamyltyramine + ADP + phosphate + H(+). It participates in cofactor biosynthesis; methanofuran biosynthesis. Functionally, catalyzes the formation of an amide bond between tyramine and the gamma carboxy group of L-glutamate. The enzyme also accepts phenylethylamine in vitro. This chain is Tyramine--L-glutamate ligase, found in Methanocaldococcus fervens (strain DSM 4213 / JCM 15782 / AG86) (Methanococcus fervens).